The chain runs to 97 residues: YcgL domain-containing protein Avin_32960 (97 aa).

The 85-residue stretch at 3 to 87 folds into the YcgL domain; it reads CICSIYKSPR…PEEEYVEHLP (85 aa).

This chain is YcgL domain-containing protein Avin_32960, found in Azotobacter vinelandii (strain DJ / ATCC BAA-1303).